Here is a 70-residue protein sequence, read N- to C-terminus: Large ribosomal subunit protein bL31 (70 aa).

The Zn(2+) site is built by Cys-16, Cys-18, Cys-37, and Cys-40.

It belongs to the bacterial ribosomal protein bL31 family. Type A subfamily. As to quaternary structure, part of the 50S ribosomal subunit. Requires Zn(2+) as cofactor.

Binds the 23S rRNA. This is Large ribosomal subunit protein bL31 from Shewanella amazonensis (strain ATCC BAA-1098 / SB2B).